The following is a 663-amino-acid chain: ATP-dependent zinc metalloprotease FtsH (663 aa).

Topologically, residues 1–12 are stromal; sequence MNKKETNTSWWR. A helical transmembrane segment spans residues 13-33; the sequence is IILISLGISIICILAAFLAMK. Residues 34–135 are Lumenal-facing; sequence DGFFVLENNT…HPPKLDIFKT (102 aa). Residues 136–156 traverse the membrane as a helical segment; it reads ISDTLGSLIVPGLVVAVFYLF. At 157–663 the chain is on the stromal side; it reads LERANNNNNN…KIYESKFPKK (507 aa). A disordered region spans residues 165-184; the sequence is NNNSNGSPFGPGGGPNQNMR. Residue 244–251 participates in ATP binding; the sequence is GPPGTGKT. Residue histidine 465 coordinates Zn(2+). Glutamate 466 is an active-site residue. Residues histidine 469 and aspartate 543 each contribute to the Zn(2+) site.

In the central section; belongs to the AAA ATPase family. The protein in the C-terminal section; belongs to the peptidase M41 family. Homohexamer. Requires Zn(2+) as cofactor.

The protein localises to the plastid. It localises to the chloroplast thylakoid membrane. Functionally, acts as a processive, ATP-dependent zinc metallopeptidase. This chain is ATP-dependent zinc metalloprotease FtsH, found in Heterosigma akashiwo (strain NIES-293 / 8280G21-1).